Reading from the N-terminus, the 97-residue chain is Defensin-like protein 245 (97 aa).

Residues M1–G24 form the signal peptide. Cystine bridges form between C39-C96, C50-C79, C58-C89, and C77-C91.

This sequence belongs to the DEFL family. In terms of tissue distribution, flower buds and roots.

Its subcellular location is the secreted. The polypeptide is Defensin-like protein 245 (SCRL4) (Arabidopsis thaliana (Mouse-ear cress)).